Consider the following 299-residue polypeptide: DNA repair protein RecO (299 aa).

Residues 1–62 are disordered; that stretch reads MTLNSDADPD…GRRAPRTPAS (62 aa). Residues 25 to 41 are compositionally biased toward low complexity; the sequence is ASKPARSTRKSSSAKSA.

This sequence belongs to the RecO family.

Involved in DNA repair and RecF pathway recombination. This chain is DNA repair protein RecO, found in Paraburkholderia xenovorans (strain LB400).